A 489-amino-acid polypeptide reads, in one-letter code: Coiled-coil domain-containing protein 77 (489 aa).

Residue S38 is modified to Phosphoserine. 2 coiled-coil regions span residues 57–120 (SQEL…QVCL) and 212–487 (ERHQ…NALR).

This chain is Coiled-coil domain-containing protein 77 (Ccdc77), found in Mus musculus (Mouse).